The chain runs to 348 residues: RNA 3'-terminal phosphate cyclase (348 aa).

ATP is bound by residues Gln-107 and 290–294; that span reads HLADQ. His-316 (tele-AMP-histidine intermediate) is an active-site residue.

Belongs to the RNA 3'-terminal cyclase family. Type 1 subfamily.

The protein resides in the cytoplasm. The catalysed reaction is a 3'-end 3'-phospho-ribonucleotide-RNA + ATP = a 3'-end 2',3'-cyclophospho-ribonucleotide-RNA + AMP + diphosphate. Functionally, catalyzes the conversion of 3'-phosphate to a 2',3'-cyclic phosphodiester at the end of RNA. The mechanism of action of the enzyme occurs in 3 steps: (A) adenylation of the enzyme by ATP; (B) transfer of adenylate to an RNA-N3'P to produce RNA-N3'PP5'A; (C) and attack of the adjacent 2'-hydroxyl on the 3'-phosphorus in the diester linkage to produce the cyclic end product. The biological role of this enzyme is unknown but it is likely to function in some aspects of cellular RNA processing. In Trichormus variabilis (strain ATCC 29413 / PCC 7937) (Anabaena variabilis), this protein is RNA 3'-terminal phosphate cyclase.